Consider the following 152-residue polypeptide: Aspartate carbamoyltransferase regulatory chain (152 aa).

Zn(2+) contacts are provided by Cys109, Cys114, Cys138, and Cys141.

Belongs to the PyrI family. Contains catalytic and regulatory chains. Requires Zn(2+) as cofactor.

Its function is as follows. Involved in allosteric regulation of aspartate carbamoyltransferase. The chain is Aspartate carbamoyltransferase regulatory chain from Proteus mirabilis (strain HI4320).